A 158-amino-acid chain; its full sequence is MQGRSSAWLVKHELVHRSLGFDYQGIETLQIKPEDWYSIAVISYVYGYNYLRSQCAYDVAPGGLLASVYHLTRIQYGVDQPEEVCIKVFAPRGNPRIPSVFWIWKSADFQERESYDMFGISYDNHPRLKRILMPESWIGWPLRKDYIAPDFYEIQDAY.

It belongs to the complex I 30 kDa subunit family. As to quaternary structure, NDH is composed of at least 16 different subunits, 5 of which are encoded in the nucleus.

It is found in the plastid. The protein localises to the chloroplast thylakoid membrane. The enzyme catalyses a plastoquinone + NADH + (n+1) H(+)(in) = a plastoquinol + NAD(+) + n H(+)(out). The catalysed reaction is a plastoquinone + NADPH + (n+1) H(+)(in) = a plastoquinol + NADP(+) + n H(+)(out). NDH shuttles electrons from NAD(P)H:plastoquinone, via FMN and iron-sulfur (Fe-S) centers, to quinones in the photosynthetic chain and possibly in a chloroplast respiratory chain. The immediate electron acceptor for the enzyme in this species is believed to be plastoquinone. Couples the redox reaction to proton translocation, and thus conserves the redox energy in a proton gradient. The polypeptide is NAD(P)H-quinone oxidoreductase subunit J, chloroplastic (Ceratophyllum demersum (Rigid hornwort)).